Consider the following 635-residue polypeptide: DNA mismatch repair protein MutL (635 aa).

The disordered stretch occupies residues lysine 352–arginine 380.

The protein belongs to the DNA mismatch repair MutL/HexB family.

This protein is involved in the repair of mismatches in DNA. It is required for dam-dependent methyl-directed DNA mismatch repair. May act as a 'molecular matchmaker', a protein that promotes the formation of a stable complex between two or more DNA-binding proteins in an ATP-dependent manner without itself being part of a final effector complex. The polypeptide is DNA mismatch repair protein MutL (Symbiobacterium thermophilum (strain DSM 24528 / JCM 14929 / IAM 14863 / T)).